The following is a 154-amino-acid chain: uncharacterized protein (154 aa).

One can recognise an HTH marR-type domain in the interval 1–143; it reads MTESERALLT…LRKLAGSLTK (143 aa). Residues 57–80 constitute a DNA-binding region (H-T-H motif); that stretch reads LSKLAMSLDLKPASVTRMTDILYK.

This is an uncharacterized protein from Bacillus subtilis (strain 168).